Reading from the N-terminus, the 106-residue chain is MADFLGMMKQAAQLQSKMKAMQAELDQIEVEGLSGGGLVKVRMSAKMEVRGISIDPSLIKADEREVLEDLLVAAHGDAHRKAEAAMQEKMQALTGGLGLPPGLGLG.

It belongs to the YbaB/EbfC family. Homodimer.

The protein resides in the cytoplasm. It localises to the nucleoid. Functionally, binds to DNA and alters its conformation. May be involved in regulation of gene expression, nucleoid organization and DNA protection. This is Nucleoid-associated protein Rpal_0620 from Rhodopseudomonas palustris (strain TIE-1).